Consider the following 129-residue polypeptide: Small ribosomal subunit protein uS11 (129 aa).

Belongs to the universal ribosomal protein uS11 family. Part of the 30S ribosomal subunit. Interacts with proteins S7 and S18. Binds to IF-3.

In terms of biological role, located on the platform of the 30S subunit, it bridges several disparate RNA helices of the 16S rRNA. Forms part of the Shine-Dalgarno cleft in the 70S ribosome. This chain is Small ribosomal subunit protein uS11, found in Staphylococcus saprophyticus subsp. saprophyticus (strain ATCC 15305 / DSM 20229 / NCIMB 8711 / NCTC 7292 / S-41).